A 753-amino-acid chain; its full sequence is Replication restart protein PriA (753 aa).

The 168-residue stretch at 228–395 (SLVAEQFQTC…LSKKYTLSVL (168 aa)) folds into the Helicase ATP-binding domain. 241–248 (GVTGSGKT) contacts ATP. Residues 337-340 (DEEH) carry the DEAH box motif. Residues C458, C461, C467, C470, C485, C488, C499, and C502 each contribute to the Zn(2+) site. The 156-residue stretch at 491 to 646 (RLSKPITSCP…DFPAFYKEEI (156 aa)) folds into the Helicase C-terminal domain.

The protein belongs to the helicase family. PriA subfamily. In terms of assembly, component of the replication restart primosome. The cofactor is Zn(2+).

It catalyses the reaction Couples ATP hydrolysis with the unwinding of duplex DNA by translocating in the 3'-5' direction.. The enzyme catalyses ATP + H2O = ADP + phosphate + H(+). Its function is as follows. Initiates the restart of stalled replication forks, which reloads the replicative helicase on sites other than the origin of replication. Recognizes and binds to abandoned replication forks and remodels them to uncover a helicase loading site. Promotes assembly of the primosome at these replication forks. In Chlamydia trachomatis serovar D (strain ATCC VR-885 / DSM 19411 / UW-3/Cx), this protein is Replication restart protein PriA.